Consider the following 294-residue polypeptide: MINGSIVALITPMNSDGSVDFASLERLVEFHIDQGTDAIVAVGTTGESATLPMNEHVTVVAQTVKFAAGRIPVIGGNGANATSEAIELTKSLSKVGVAAMLGVTPYYNKPTPKGLVAHYKAVAASTDIPQILYNVPGRTAVDMKPETVAELVGVSNIIGVKEATGDVSRVKRLRELCGNDFMLYSGDDATAREFLLLGGNGVISVANNIVPKAFKAMCDAALAGNAELAASIDEPLRGLYSTLFCEANPIPVKWAAHRMGLIECGHIRLPLTELSEQCHGLLLDAMTRAQIEVK.

Thr45 lines the pyruvate pocket. Catalysis depends on Tyr133, which acts as the Proton donor/acceptor. Lys161 acts as the Schiff-base intermediate with substrate in catalysis. Ile203 is a pyruvate binding site.

This sequence belongs to the DapA family. Homotetramer; dimer of dimers.

It is found in the cytoplasm. The enzyme catalyses L-aspartate 4-semialdehyde + pyruvate = (2S,4S)-4-hydroxy-2,3,4,5-tetrahydrodipicolinate + H2O + H(+). It participates in amino-acid biosynthesis; L-lysine biosynthesis via DAP pathway; (S)-tetrahydrodipicolinate from L-aspartate: step 3/4. Catalyzes the condensation of (S)-aspartate-beta-semialdehyde [(S)-ASA] and pyruvate to 4-hydroxy-tetrahydrodipicolinate (HTPA). This chain is 4-hydroxy-tetrahydrodipicolinate synthase, found in Shewanella sp. (strain MR-7).